The chain runs to 159 residues: Ribosomal RNA large subunit methyltransferase H (159 aa).

2 residues coordinate S-adenosyl-L-methionine: Leu76 and Gly108.

This sequence belongs to the RNA methyltransferase RlmH family. As to quaternary structure, homodimer.

The protein localises to the cytoplasm. It carries out the reaction pseudouridine(1915) in 23S rRNA + S-adenosyl-L-methionine = N(3)-methylpseudouridine(1915) in 23S rRNA + S-adenosyl-L-homocysteine + H(+). Its function is as follows. Specifically methylates the pseudouridine at position 1915 (m3Psi1915) in 23S rRNA. In Finegoldia magna (strain ATCC 29328 / DSM 20472 / WAL 2508) (Peptostreptococcus magnus), this protein is Ribosomal RNA large subunit methyltransferase H.